The following is a 505-amino-acid chain: Aminoaldehyde dehydrogenase 1a (505 aa).

Aspartate 101 is a binding site for Na(+). Residues threonine 161 to tryptophan 163 and lysine 187 to glutamate 190 each bind NAD(+). Position 191 (leucine 191) interacts with Na(+). NAD(+) contacts are provided by residues serine 241–threonine 244 and glutamate 262. Residue glutamate 262 is the Proton acceptor of the active site. Catalysis depends on cysteine 296, which acts as the Nucleophile. NAD(+)-binding residues include glutamate 395 and tryptophan 461.

Belongs to the aldehyde dehydrogenase family. In terms of assembly, forms homodimers.

The catalysed reaction is 4-aminobutanal + NAD(+) + H2O = 4-aminobutanoate + NADH + 2 H(+). The enzyme catalyses 3-aminopropanal + NAD(+) + H2O = beta-alanine + NADH + 2 H(+). It catalyses the reaction 4-(trimethylamino)butanal + NAD(+) + H2O = 4-(trimethylamino)butanoate + NADH + 2 H(+). It carries out the reaction 4-guanidinobutanal + NAD(+) + H2O = 4-guanidinobutanoate + NADH + 2 H(+). The catalysed reaction is betaine aldehyde + NAD(+) + H2O = glycine betaine + NADH + 2 H(+). It functions in the pathway amine and polyamine biosynthesis; betaine biosynthesis via choline pathway; betaine from betaine aldehyde: step 1/1. Functionally, dehydrogenase that catalyzes the oxidation of several aminoaldehydes. Metabolizes and detoxifies aldehyde products of polyamine degradation to non-toxic amino acids. Catalyzes the oxidation of 4-aminobutanal and 3-aminopropanal to 4-aminobutanoate and beta-alanine, respectively. Catalyzes the oxidation of 4-(trimethylamino)butanal and 4-guanidinobutanal to 4-trimethylammoniobutanoate and 4-guanidinobutanoate, respectively. Catalyzes the oxidation of betaine aldehyde to glycine betaine. In terms of biological role, dehydrogenase that catalyzes the oxidation of several aminoaldehydes. Catalyzes the oxidation of betaine aldehyde to glycine betaine. Catalyzes the oxidation of 4-(trimethylamino)butanal to 4-trimethylammoniobutanoate. The polypeptide is Aminoaldehyde dehydrogenase 1a (Zea mays (Maize)).